The following is a 607-amino-acid chain: Dolichyl-diphosphooligosaccharide--protein glycosyltransferase subunit 1 (607 aa).

Positions 1-24 (MEVPTARLLLLLLLGAWAPAPESA) are cleaved as a signal peptide. Over 25 to 434 (SPEAPLLVNE…VVHYTFNKVL (410 aa)) the chain is Lumenal. Residue Lys187 is modified to N6-acetyllysine. N-linked (GlcNAc...) asparagine glycosylation occurs at Asn299. Residues 435 to 455 (MLQEPLLVVAAFYILFFTVII) form a helical membrane-spanning segment. Over 456–607 (YVRLDFSITK…TKIDHILDAL (152 aa)) the chain is Cytoplasmic. Lys538 is modified (N6-acetyllysine; alternate). Lys538 is covalently cross-linked (Glycyl lysine isopeptide (Lys-Gly) (interchain with G-Cter in SUMO2); alternate).

The protein belongs to the OST1 family. Component of the oligosaccharyltransferase (OST) complex. OST exists in two different complex forms which contain common core subunits RPN1, RPN2, OST48, OST4, DAD1 and TMEM258, either STT3A or STT3B as catalytic subunits, and form-specific accessory subunits. STT3A complex assembly occurs through the formation of 3 subcomplexes. Subcomplex 1 contains RPN1 and TMEM258, subcomplex 2 contains the STT3A-specific subunits STT3A, DC2/OSTC, and KCP2 as well as the core subunit OST4, and subcomplex 3 contains RPN2, DAD1, and OST48. The STT3A complex can form stable complexes with the Sec61 complex or with both the Sec61 and TRAP complexes. Interacts with TMEM35A/NACHO. Post-translationally, ubiquitinated by the ECS(ASB11) complex. Ufmylated by UFL1 in response to endoplasmic reticulum stress, promoting reticulophagy of endoplasmic reticulum sheets.

Its subcellular location is the endoplasmic reticulum membrane. It functions in the pathway protein modification; protein glycosylation. In terms of biological role, subunit of the oligosaccharyl transferase (OST) complex that catalyzes the initial transfer of a defined glycan (Glc(3)Man(9)GlcNAc(2) in eukaryotes) from the lipid carrier dolichol-pyrophosphate to an asparagine residue within an Asn-X-Ser/Thr consensus motif in nascent polypeptide chains, the first step in protein N-glycosylation. N-glycosylation occurs cotranslationally and the complex associates with the Sec61 complex at the channel-forming translocon complex that mediates protein translocation across the endoplasmic reticulum (ER). All subunits are required for a maximal enzyme activity. This is Dolichyl-diphosphooligosaccharide--protein glycosyltransferase subunit 1 from Canis lupus familiaris (Dog).